Reading from the N-terminus, the 259-residue chain is Thiazole synthase (259 aa).

The active-site Schiff-base intermediate with DXP is lysine 98. Residues glycine 159, 185–186, and 207–208 contribute to the 1-deoxy-D-xylulose 5-phosphate site; these read AG and NS.

The protein belongs to the ThiG family. Homotetramer. Forms heterodimers with either ThiH or ThiS.

Its subcellular location is the cytoplasm. The enzyme catalyses [ThiS sulfur-carrier protein]-C-terminal-Gly-aminoethanethioate + 2-iminoacetate + 1-deoxy-D-xylulose 5-phosphate = [ThiS sulfur-carrier protein]-C-terminal Gly-Gly + 2-[(2R,5Z)-2-carboxy-4-methylthiazol-5(2H)-ylidene]ethyl phosphate + 2 H2O + H(+). Its pathway is cofactor biosynthesis; thiamine diphosphate biosynthesis. Catalyzes the rearrangement of 1-deoxy-D-xylulose 5-phosphate (DXP) to produce the thiazole phosphate moiety of thiamine. Sulfur is provided by the thiocarboxylate moiety of the carrier protein ThiS. In vitro, sulfur can be provided by H(2)S. This Chlorobium phaeobacteroides (strain BS1) protein is Thiazole synthase.